Reading from the N-terminus, the 1070-residue chain is Alpha-glucosidase (1070 aa).

Residues 1 to 35 (MRSIKAASLTPLLAALFTTLSSTLALPSSVWEHQL) form the signal peptide. N-linked (GlcNAc...) asparagine glycosylation is found at N48, N99, N144, N161, N208, N384, N458, N480, and N513. D526 acts as the Nucleophile in catalysis. E529 is an active-site residue. Residues N544, N566, N574, N578, and N635 are each glycosylated (N-linked (GlcNAc...) asparagine). D730 serves as the catalytic Proton donor. N-linked (GlcNAc...) asparagine glycans are attached at residues N818, N885, N916, N983, N992, N996, N1008, N1029, N1043, and N1052.

It belongs to the glycosyl hydrolase 31 family.

It carries out the reaction Hydrolysis of terminal, non-reducing (1-&gt;4)-linked alpha-D-glucose residues with release of alpha-D-glucose.. Its function is as follows. Hydrolyzes a broad range of alpha-D-linked glucopyranosides, including maltose (alpha-1,4), sucrose (alpha-1,2), isomaltose (alpha-1,6) and turanose (alpha-1,3). This Candida tsukubaensis (Yeast) protein is Alpha-glucosidase.